We begin with the raw amino-acid sequence, 375 residues long: Growth/differentiation factor 8 (375 aa).

An N-terminal signal peptide occupies residues 1 to 18 (MQRLQICVYIYLFVLIVA). The propeptide occupies 19–266 (GPVDLSENSE…VTDTPKRSRR (248 aa)). Asparagine 71 is a glycosylation site (N-linked (GlcNAc...) asparagine). 3 disulfides stabilise this stretch: cysteine 281-cysteine 340, cysteine 309-cysteine 372, and cysteine 313-cysteine 374.

Belongs to the TGF-beta family. In terms of assembly, homodimer; disulfide-linked. Interacts with WFIKKN2, leading to inhibit its activity. Interacts with FSTL3. Synthesized as large precursor molecule that undergoes proteolytic cleavage to generate an N-terminal propeptide and a disulfide linked C-terminal dimer, which is the biologically active molecule. The circulating form consists of a latent complex of the C-terminal dimer and other proteins, including its propeptide, which maintain the C-terminal dimer in a latent, inactive state. Ligand activation requires additional cleavage of the prodomain by a tolloid-like metalloproteinase.

The protein localises to the secreted. Acts specifically as a negative regulator of skeletal muscle growth. The sequence is that of Growth/differentiation factor 8 (MSTN) from Vulpes vulpes (Red fox).